We begin with the raw amino-acid sequence, 175 residues long: 6,7-dimethyl-8-ribityllumazine synthase (175 aa).

Residues Phe24, 58–60 (ALE), and 82–84 (AVI) contribute to the 5-amino-6-(D-ribitylamino)uracil site. 87–88 (ET) is a (2S)-2-hydroxy-3-oxobutyl phosphate binding site. The active-site Proton donor is the His90. Asn115 provides a ligand contact to 5-amino-6-(D-ribitylamino)uracil. A (2S)-2-hydroxy-3-oxobutyl phosphate-binding site is contributed by Arg129. The segment at 151 to 175 (LEPEEDDEDEDEEDEDFDDEETDRR) is disordered. Acidic residues predominate over residues 152–175 (EPEEDDEDEDEEDEDFDDEETDRR).

The protein belongs to the DMRL synthase family.

It catalyses the reaction (2S)-2-hydroxy-3-oxobutyl phosphate + 5-amino-6-(D-ribitylamino)uracil = 6,7-dimethyl-8-(1-D-ribityl)lumazine + phosphate + 2 H2O + H(+). It functions in the pathway cofactor biosynthesis; riboflavin biosynthesis; riboflavin from 2-hydroxy-3-oxobutyl phosphate and 5-amino-6-(D-ribitylamino)uracil: step 1/2. Catalyzes the formation of 6,7-dimethyl-8-ribityllumazine by condensation of 5-amino-6-(D-ribitylamino)uracil with 3,4-dihydroxy-2-butanone 4-phosphate. This is the penultimate step in the biosynthesis of riboflavin. In Bordetella petrii (strain ATCC BAA-461 / DSM 12804 / CCUG 43448), this protein is 6,7-dimethyl-8-ribityllumazine synthase.